Consider the following 130-residue polypeptide: Small ribosomal subunit protein uS9 (130 aa).

It belongs to the universal ribosomal protein uS9 family.

The chain is Small ribosomal subunit protein uS9 from Shewanella piezotolerans (strain WP3 / JCM 13877).